A 295-amino-acid polypeptide reads, in one-letter code: 4-hydroxy-tetrahydrodipicolinate synthase (295 aa).

Residue Thr47 coordinates pyruvate. The Proton donor/acceptor role is filled by Tyr135. Lys163 functions as the Schiff-base intermediate with substrate in the catalytic mechanism. Ile206 provides a ligand contact to pyruvate.

This sequence belongs to the DapA family. Homodimer.

The protein resides in the cytoplasm. The catalysed reaction is L-aspartate 4-semialdehyde + pyruvate = (2S,4S)-4-hydroxy-2,3,4,5-tetrahydrodipicolinate + H2O + H(+). It functions in the pathway amino-acid biosynthesis; L-lysine biosynthesis via DAP pathway; (S)-tetrahydrodipicolinate from L-aspartate: step 3/4. Is not feedback inhibited by lysine. In terms of biological role, catalyzes the condensation of (S)-aspartate-beta-semialdehyde [(S)-ASA] and pyruvate to 4-hydroxy-tetrahydrodipicolinate (HTPA). This chain is 4-hydroxy-tetrahydrodipicolinate synthase, found in Staphylococcus aureus (strain COL).